The chain runs to 444 residues: uncharacterized protein (444 aa).

K268 carries the N6-(pyridoxal phosphate)lysine modification.

Belongs to the class-III pyridoxal-phosphate-dependent aminotransferase family. Pyridoxal 5'-phosphate is required as a cofactor.

This is an uncharacterized protein from Bacillus subtilis (strain 168).